Reading from the N-terminus, the 286-residue chain is Nucleotide-binding protein HAPS_0087 (286 aa).

Position 8–15 (8–15 (GRSGSGKS)) interacts with ATP. 56 to 59 (DVRN) contributes to the GTP binding site.

The protein belongs to the RapZ-like family.

Displays ATPase and GTPase activities. This chain is Nucleotide-binding protein HAPS_0087, found in Glaesserella parasuis serovar 5 (strain SH0165) (Haemophilus parasuis).